A 654-amino-acid chain; its full sequence is Endoplasmic reticulum chaperone BiP (654 aa).

Positions 1–18 (MKLSLVAAVLLLLCAARA) are cleaved as a signal peptide. The interval 1-80 (MKLSLVAAVL…EGERLIGDAA (80 aa)) is required for interaction with ELAPOR1. 36 to 39 (GTTY) provides a ligand contact to ATP. Phosphoserine is present on Ser86. Lys96 contributes to the ATP binding site. Lys125 carries the N6-acetyllysine modification. The segment at 125–280 (KPYIQVDIGG…KKKTGKDVRK (156 aa)) is nucleotide-binding (NBD). 3'-nitrotyrosine is present on Tyr160. Position 213 is an N6-acetyllysine (Lys213). 227-229 (GGT) provides a ligand contact to ATP. An N6-acetyllysine modification is found at Lys271. ATP is bound at residue 293–300 (EKAKRALS). Lys326 carries the N6-acetyllysine modification. Residue Lys352 forms a Glycyl lysine isopeptide (Lys-Gly) (interchain with G-Cter in SUMO2) linkage. Lys353 is subject to N6-acetyllysine; alternate. Lys353 is covalently cross-linked (Glycyl lysine isopeptide (Lys-Gly) (interchain with G-Cter in SUMO1); alternate). 364–367 (GSTR) is an ATP binding site. The segment at 409–419 (QDTGDLVLLDV) is interdomain linker. Positions 420-500 (CPLTLGIETV…PRGVPQIEVT (81 aa)) are substrate-binding (SBD). At Lys447 the chain carries N6-succinyllysine. Arg492 carries the omega-N-methylarginine modification. Thr518 is subject to O-AMP-threonine; alternate. Thr518 is subject to Phosphothreonine; alternate. Lys585 carries the post-translational modification N6,N6,N6-trimethyllysine; by METTL21A; in vitro. At Lys585 the chain carries N6,N6-dimethyllysine; alternate. N6-methyllysine; alternate is present on Lys585. Residue Lys591 is modified to N6-methyllysine. Residues 632 to 654 (SKLYGSAGPPPTGEEDTSERDEL) are disordered. A phosphothreonine mark is found at Thr643 and Thr648. Residues 644–654 (GEEDTSERDEL) show a composition bias toward acidic residues. Ser649 bears the Phosphoserine mark. The short motif at 651-654 (RDEL) is the Prevents secretion from ER element.

The protein belongs to the heat shock protein 70 family. In terms of assembly, monomer and homooligomer; homooligomerization via the interdomain linker inactivates the chaperone activity and acts as a storage of HSPA5/BiP molecules. Interacts with DNAJC1 (via J domain). Component of an EIF2 complex at least composed of CELF1/CUGBP1, CALR, CALR3, EIF2S1, EIF2S2, HSP90B1 and HSPA5. Part of a large chaperone multiprotein complex comprising DNAJB11, HSP90B1, HSPA5, HYOU, PDIA2, PDIA4, PDIA6, PPIB, SDF2L1, UGGT1 and very small amounts of ERP29, but not, or at very low levels, CALR nor CANX. Interacts with TMEM132A and TRIM21. May form a complex with ERLEC1, OS9, SEL1L and SYVN1. Interacts with DNAJC10. Interacts with DNAJB9/ERdj4; leading to recruit HSPA5/BiP to ERN1/IRE1. Interacts with ERN1/IRE1 (via luminal domain); the interaction takes place following interaction with DNAJB9/ERdj4 and leads to inactivate ERN1/IRE1, the interaction also competitively inhibits ERN1 interaction with MANF. Interacts directly with MANF (via SAP domain); the interaction inhibits ATP binding to HSPA5/BiP and subsequent nucleotide exchange. Interacts with EIF2AK3/PERK (via luminal domain); interaction leads to inactivate EIF2AK3/PERK. Interacts with MX1. Interacts with METTL23. Interacts with CEMIP; the interaction induces calcium leakage from the endoplasmic reticulum and cell migration. Interacts with PCSK4 form; the interaction takes place in the endoplasmic reticulum. Interacts with CIPC. Interacts with CCDC88B (via C-terminus); the interaction opposes ERN1-mediated JNK activation, protecting against apoptosis. Interacts with INPP5K; necessary for INPP5K localization at the endoplasmic reticulum. Interacts with MANF; the interaction is direct. Interacts with LOXL2; leading to activate the ERN1/IRE1-XBP1 pathway of the unfolded protein response. Interacts with CLU under stressed condition; interaction increases CLU protein stability; facilitates its retrotranslocation and redistribution to the mitochondria; cooperatively suppress stress-induced apoptosis by stabilizing mitochondrial membrane integrity. Interacts with CCDC47. Interacts with CLN3. Interacts with ELAPOR1; may regulate the function of HSPA5 in apoptosis and cell proliferation. Interacts with CASP7. Interacts with ILDR2; the interaction stabilizes ILDR2 expression. Interacts with ADAM7. In terms of processing, in unstressed cells, AMPylation at Thr-518 by FICD inactivates the chaperome activity: AMPylated form is locked in a relatively inert state and only weakly stimulated by J domain-containing proteins. In response to endoplasmic reticulum stress, de-AMPylation by the same protein, FICD, restores the chaperone activity.

Its subcellular location is the endoplasmic reticulum lumen. The protein resides in the melanosome. It localises to the cytoplasm. The protein localises to the cell surface. The enzyme catalyses ATP + H2O = ADP + phosphate + H(+). Its activity is regulated as follows. The chaperone activity is regulated by ATP-induced allosteric coupling of the nucleotide-binding (NBD) and substrate-binding (SBD) domains. In the ADP-bound and nucleotide-free (apo) states, the two domains have little interaction. In contrast, in the ATP-bound state the two domains are tightly coupled, which results in drastically accelerated kinetics in both binding and release of polypeptide substrates. J domain-containing co-chaperones (DNAJB9/ERdj4 or DNAJC10/ERdj5) stimulate the ATPase activity and are required for efficient substrate recognition by HSPA5/BiP. Homooligomerization inactivates participating HSPA5/BiP protomers and probably act as reservoirs to store HSPA5/BiP molecules when they are not needed by the cell. Endoplasmic reticulum chaperone that plays a key role in protein folding and quality control in the endoplasmic reticulum lumen. Involved in the correct folding of proteins and degradation of misfolded proteins via its interaction with DNAJC10/ERdj5, probably to facilitate the release of DNAJC10/ERdj5 from its substrate. Acts as a key repressor of the EIF2AK3/PERK and ERN1/IRE1-mediated unfolded protein response (UPR). In the unstressed endoplasmic reticulum, recruited by DNAJB9/ERdj4 to the luminal region of ERN1/IRE1, leading to disrupt the dimerization of ERN1/IRE1, thereby inactivating ERN1/IRE1. Also binds and inactivates EIF2AK3/PERK in unstressed cells. Accumulation of misfolded protein in the endoplasmic reticulum causes release of HSPA5/BiP from ERN1/IRE1 and EIF2AK3/PERK, allowing their homodimerization and subsequent activation. Plays an auxiliary role in post-translational transport of small presecretory proteins across endoplasmic reticulum (ER). May function as an allosteric modulator for SEC61 channel-forming translocon complex, likely cooperating with SEC62 to enable the productive insertion of these precursors into SEC61 channel. Appears to specifically regulate translocation of precursors having inhibitory residues in their mature region that weaken channel gating. May also play a role in apoptosis and cell proliferation. This is Endoplasmic reticulum chaperone BiP from Ictidomys tridecemlineatus (Thirteen-lined ground squirrel).